The following is a 112-amino-acid chain: Secretoglobin family 2B member 20 (112 aa).

An N-terminal signal peptide occupies residues 1–23; that stretch reads MKGTLLLLGLLVTGELSFQTTEA. An N-linked (GlcNAc...) asparagine glycan is attached at asparagine 50.

This sequence belongs to the secretoglobin family. As to expression, expressed in lacrimal gland, at higher level in males than females. Expressed in the submandibular gland.

The protein resides in the secreted. This is Secretoglobin family 2B member 20 (Scgb2b20) from Mus musculus (Mouse).